Consider the following 1160-residue polypeptide: Protein GIGANTEA (1160 aa).

Over residues Cys-158 to Glu-169 the composition is skewed to polar residues. Disordered stretches follow at residues Cys-158–Leu-188, Gly-600–Cys-629, and Pro-800–His-830. The span at Ser-170–Pro-187 shows a compositional bias: basic and acidic residues. Basic and acidic residues predominate over residues Val-801–Asn-812.

This sequence belongs to the GIGANTEA family.

The protein resides in the nucleus. Involved in regulation of circadian rhythm, and in the control of the photoperiodic flowering. Acts as a suppressor of flowering under short-day (SD) and long-day (LD) conditions. Activates Hd1/CONSTANS gene. The polypeptide is Protein GIGANTEA (GI) (Oryza sativa subsp. japonica (Rice)).